We begin with the raw amino-acid sequence, 278 residues long: 3-methyl-2-oxobutanoate hydroxymethyltransferase (278 aa).

Mg(2+)-binding residues include aspartate 43 and aspartate 82. Residues 43-44 (DS), aspartate 82, and lysine 112 each bind 3-methyl-2-oxobutanoate. A Mg(2+)-binding site is contributed by glutamate 114. The active-site Proton acceptor is glutamate 181.

Belongs to the PanB family. As to quaternary structure, homodecamer; pentamer of dimers. It depends on Mg(2+) as a cofactor.

The protein resides in the cytoplasm. It catalyses the reaction 3-methyl-2-oxobutanoate + (6R)-5,10-methylene-5,6,7,8-tetrahydrofolate + H2O = 2-dehydropantoate + (6S)-5,6,7,8-tetrahydrofolate. The protein operates within cofactor biosynthesis; (R)-pantothenate biosynthesis; (R)-pantoate from 3-methyl-2-oxobutanoate: step 1/2. Functionally, catalyzes the reversible reaction in which hydroxymethyl group from 5,10-methylenetetrahydrofolate is transferred onto alpha-ketoisovalerate to form ketopantoate. This Bacillus cereus (strain ATCC 10987 / NRS 248) protein is 3-methyl-2-oxobutanoate hydroxymethyltransferase.